A 566-amino-acid chain; its full sequence is Type 3 secretion system secretin (566 aa).

A signal peptide spans 1-22 (MKKFNIKSLTLLIVLLPLIVNA).

The protein belongs to the bacterial secretin family. T3SS SctC subfamily. As to quaternary structure, the core secretion machinery of the T3SS is composed of approximately 20 different proteins, including cytoplasmic components, a base, an export apparatus and a needle. This subunit is part of the base, which anchors the injectisome in the bacterial cell envelope. Forms a stable homooligomeric complex. Interacts with the pilotin MxiM/SctG and the inner membrane ring outer protein MxiJ/SctJ.

The protein resides in the cell outer membrane. Functionally, component of the type III secretion system (T3SS), also called injectisome, which is used to inject bacterial effector proteins into eukaryotic host cells. Forms a ring-shaped multimeric structure with an apparent central pore in the outer membrane. Necessary for the secretion of Ipa invasins. The sequence is that of Type 3 secretion system secretin from Shigella flexneri.